The chain runs to 1228 residues: P3N-PIPO polyprotein (1228 aa).

The Peptidase S30 domain occupies 408–547; the sequence is IVGNSKINYI…RSVYAKMDQY (140 aa). Active-site for P1 proteinase activity residues include His456, Asp465, and Ser499. The short motif at 598–601 is the Involved in interaction with stylet and aphid transmission element; that stretch reads KITC. Positions 856–858 match the Involved in virions binding and aphid transmission motif; the sequence is PTK. The Peptidase C6 domain maps to 882–1004; sequence MYIAKKGYCY…DSEMKHYIVG (123 aa). Active-site for helper component proteinase activity residues include Cys890 and His963.

Belongs to the potyviridae P3N-PIPO polyprotein family. Interacts (via PIPO domain) with host PCaP1 protein; this interaction may help to anchor the movement complex to the plasma membrane from which the complex could move to the plasmodesmata. In terms of processing, potyviral RNA is expressed as two polyproteins which undergo post-translational proteolytic processing. Genome polyprotein is processed by NIa-pro, P1 and HC-pro proteinases resulting in the production of at least ten individual proteins. P3N-PIPO is cleaved by P1 and HC-pro proteinases resulting in the production of three individual proteins. The P1 proteinase and the HC-pro cleave only their respective C-termini autocatalytically.

It is found in the host cell junction. Its subcellular location is the host plasmodesma. It carries out the reaction Hydrolyzes a Gly-|-Gly bond at its own C-terminus, commonly in the sequence -Tyr-Xaa-Val-Gly-|-Gly, in the processing of the potyviral polyprotein.. Its function is as follows. Required for aphid transmission and also has proteolytic activity. Only cleaves a Gly-Gly dipeptide at its own C-terminus. Interacts with virions and aphid stylets. Acts as a suppressor of RNA-mediated gene silencing, also known as post-transcriptional gene silencing (PTGS), a mechanism of plant viral defense that limits the accumulation of viral RNAs. May have RNA-binding activity. Allows efficient cell to cell propagation, by bypassing the host cell wall barrier. Transports viral genome to neighboring plant cells directly through plasmosdesmata, without any budding. This Carica papaya (Papaya) protein is P3N-PIPO polyprotein.